The chain runs to 183 residues: Bifunctional protein PyrR (183 aa).

Residues 46–47, arginine 87, 107–115, arginine 140, and valine 164 each bind substrate; these read TR and DDVIFSGRT. The short motif at 103 to 115 is the PRPP-binding element; it reads VVLVDDVIFSGRT.

Belongs to the purine/pyrimidine phosphoribosyltransferase family. PyrR subfamily.

The catalysed reaction is UMP + diphosphate = 5-phospho-alpha-D-ribose 1-diphosphate + uracil. Regulates the transcription of the pyrimidine nucleotide (pyr) operon in response to exogenous pyrimidines. Its function is as follows. Also displays a weak uracil phosphoribosyltransferase activity which is not physiologically significant. This is Bifunctional protein PyrR from Thermosynechococcus vestitus (strain NIES-2133 / IAM M-273 / BP-1).